The primary structure comprises 284 residues: Tropomyosin (284 aa).

Residues 1–284 are a coiled coil; it reads MDGIKKKMIA…DQTFAELTGY (284 aa). The interval 111-131 is disordered; sequence TKLEEASKTAEESERGRKDLE.

The protein belongs to the tropomyosin family. In terms of assembly, homodimer.

Tropomyosin, in association with the troponin complex, plays a central role in the calcium dependent regulation of muscle contraction. The chain is Tropomyosin from Schistosoma japonicum (Blood fluke).